The chain runs to 274 residues: 2,3,4,5-tetrahydropyridine-2,6-dicarboxylate N-succinyltransferase (274 aa).

Substrate contacts are provided by Arg-106 and Asp-143.

The protein belongs to the transferase hexapeptide repeat family. As to quaternary structure, homotrimer.

Its subcellular location is the cytoplasm. The catalysed reaction is (S)-2,3,4,5-tetrahydrodipicolinate + succinyl-CoA + H2O = (S)-2-succinylamino-6-oxoheptanedioate + CoA. It functions in the pathway amino-acid biosynthesis; L-lysine biosynthesis via DAP pathway; LL-2,6-diaminopimelate from (S)-tetrahydrodipicolinate (succinylase route): step 1/3. The protein is 2,3,4,5-tetrahydropyridine-2,6-dicarboxylate N-succinyltransferase of Herminiimonas arsenicoxydans.